Consider the following 248-residue polypeptide: MSGHSKWATIKHKKAATDAKRGRAFTRLIKEITIAARNGGDPDGNPRLRSAILAAKNVSMPSDNIKKAIMRGTGELEGGQIEEVMFEGYGPGGAAVLVNVATDNRNRTVSEIRHAFSKNGGNMGEQGSVAWMFERRSQIFVPIEKATEDQLMGIVLDAGGDDLRNDGDQWEVLSDPASHDSVLKALESNGIPVVDPTIAWVPKNLMKLEGKNASGMLRLTEVLEDHDDVQSVYSNFDIDEKELEALSQ.

This sequence belongs to the TACO1 family.

It is found in the cytoplasm. The chain is Probable transcriptional regulatory protein Acid_5948 from Solibacter usitatus (strain Ellin6076).